A 205-amino-acid polypeptide reads, in one-letter code: Carboxysome shell protein CsoS1D (205 aa).

2 BMC circularly permuted domains span residues 3–100 and 106–205; these read ELRT…TREY and VVMW…TCRS. The short motif at 68 to 69 is the Gates the pore element; sequence ER.

This sequence belongs to the EutL/PduB family. In terms of assembly, homotrimer. Forms a dimer of stacked trimers, the same faces interact. Probably forms a CsoS1-CsoS1D-CsoS2 complex.

Its subcellular location is the carboxysome. Functionally, part of the carboxysome shell, a polyhedral inclusion where RuBisCO (ribulose bisphosphate carboxylase, cbbL-cbbS) is sequestered. It may control transport of RuBisCO reactants in and out of the carboxysome. In Hydrogenovibrio crunogenus (strain DSM 25203 / XCL-2) (Thiomicrospira crunogena), this protein is Carboxysome shell protein CsoS1D.